A 520-amino-acid chain; its full sequence is Laccase-1 (520 aa).

The first 21 residues, 1–21 (MSRFHSLLAFVVASLTAVAHA), serve as a signal peptide directing secretion. Plastocyanin-like domains are found at residues 23–148 (IGPV…FVVY) and 160–302 (VDND…ILRY). N-linked (GlcNAc...) asparagine glycans are attached at residues Asn72 and Asn75. Positions 85, 87, 130, and 132 each coordinate Cu cation. 2 cysteine pairs are disulfide-bonded: Cys106–Cys509 and Cys138–Cys226. 4 N-linked (GlcNAc...) asparagine glycosylation sites follow: Asn229, Asn238, Asn354, and Asn361. The Plastocyanin-like 3 domain occupies 369-491 (TVPVLLQIIS…AGFAVVFAED (123 aa)). Cu cation-binding residues include His416, His419, His421, His473, Cys474, His475, and His479.

It belongs to the multicopper oxidase family. In terms of assembly, homodimer. The cofactor is Cu cation.

Its subcellular location is the secreted. The catalysed reaction is 4 hydroquinone + O2 = 4 benzosemiquinone + 2 H2O. In terms of biological role, lignin degradation and detoxification of lignin-derived products. This Trametes villosa (White-rot fungus) protein is Laccase-1.